The following is a 373-amino-acid chain: D-alanine--D-alanine ligase (373 aa).

Residues 156–363 (KKLLAADGLP…YPTLLATMIE (208 aa)) enclose the ATP-grasp domain. 184 to 239 (CERLGLPVFVKPARGGSSIGVSRVSSWDQLPAAVARARRHDPKVIVEAAISGRELE) serves as a coordination point for ATP. Residues Asp318, Glu330, and Asn332 each coordinate Mg(2+).

It belongs to the D-alanine--D-alanine ligase family. The cofactor is Mg(2+). Mn(2+) serves as cofactor.

The protein localises to the cytoplasm. It carries out the reaction 2 D-alanine + ATP = D-alanyl-D-alanine + ADP + phosphate + H(+). The protein operates within cell wall biogenesis; peptidoglycan biosynthesis. In terms of biological role, cell wall formation. The protein is D-alanine--D-alanine ligase of Mycobacterium bovis (strain BCG / Pasteur 1173P2).